A 390-amino-acid chain; its full sequence is Lipid-A-disaccharide synthase (390 aa).

This sequence belongs to the LpxB family.

The enzyme catalyses a lipid X + a UDP-2-N,3-O-bis[(3R)-3-hydroxyacyl]-alpha-D-glucosamine = a lipid A disaccharide + UDP + H(+). The protein operates within bacterial outer membrane biogenesis; LPS lipid A biosynthesis. Condensation of UDP-2,3-diacylglucosamine and 2,3-diacylglucosamine-1-phosphate to form lipid A disaccharide, a precursor of lipid A, a phosphorylated glycolipid that anchors the lipopolysaccharide to the outer membrane of the cell. In Rickettsia felis (strain ATCC VR-1525 / URRWXCal2) (Rickettsia azadi), this protein is Lipid-A-disaccharide synthase.